A 63-amino-acid polypeptide reads, in one-letter code: Toxin Cn11 (63 aa).

The region spanning 2-63 (RDGYPVDEKG…KVWTYETNTC (62 aa)) is the LCN-type CS-alpha/beta domain. Cystine bridges form between Cys-12–Cys-63, Cys-16–Cys-37, Cys-23–Cys-44, and Cys-27–Cys-46.

The protein belongs to the long (4 C-C) scorpion toxin superfamily. Sodium channel inhibitor family. As to expression, expressed by the venom gland.

The protein resides in the secreted. First blocker of sodium channels (Nav) found in scorpions. Is lethal to crustaceans (Cambarellus montezumae), less toxic to insects (crickets) and non-toxic to mammals (mice) at the doses assayed. The chain is Toxin Cn11 from Centruroides noxius (Mexican scorpion).